Here is a 389-residue protein sequence, read N- to C-terminus: Chalcone synthase 1 (389 aa).

The active site involves cysteine 164.

Belongs to the thiolase-like superfamily. Chalcone/stilbene synthases family.

The enzyme catalyses (E)-4-coumaroyl-CoA + 3 malonyl-CoA + 3 H(+) = 2',4,4',6'-tetrahydroxychalcone + 3 CO2 + 4 CoA. Its pathway is secondary metabolite biosynthesis; flavonoid biosynthesis. In terms of biological role, the primary product of this enzyme is 4,2',4',6'-tetrahydroxychalcone (also termed naringenin-chalcone or chalcone) which can under specific conditions spontaneously isomerize into naringenin. This is Chalcone synthase 1 (CHS1) from Medicago sativa (Alfalfa).